A 497-amino-acid polypeptide reads, in one-letter code: Peptidoglycan endopeptidase RipA (497 aa).

The signal sequence occupies residues 1 to 39 (MRRTVRALATRVHGRVCAVPLVVGMLLATALYGGGPAAA). The span at 177 to 192 (ARLAKEKADQAARDAE) shows a compositional bias: basic and acidic residues. 2 disordered regions span residues 177 to 198 (ARLA…QDNA) and 253 to 297 (APAA…GQNW). Residues 255–273 (AAAPAPVPNSAPAPVPGAQ) are compositionally biased toward pro residues. Residues 365–497 (REAVEYVIRR…TPYVTRLIEY (133 aa)) form the NlpC/P60 domain. C408 functions as the Nucleophile in the catalytic mechanism. The active-site Proton acceptor is H457. The active site involves E469.

Belongs to the peptidase C40 family. As to quaternary structure, monomer.

Its subcellular location is the secreted. In terms of biological role, peptidoglycan endopeptidase that cleaves the bond between D-glutamate and meso-diaminopimelate. Binds and degrades high-molecular weight peptidoglycan. Required for normal separation of daughter cells after cell division and for cell wall integrity. The polypeptide is Peptidoglycan endopeptidase RipA (ripA) (Mycolicibacterium smegmatis (strain ATCC 700084 / mc(2)155) (Mycobacterium smegmatis)).